The following is a 171-amino-acid chain: MFVVKMVLGFLILLSPLCATGLDISQTDIIERSLNFLLFVGILWYFSAKKLRSFLRSKSLEISKRLEEIQAQLKVSKENKKKLLKELEQAKEKAELIVSDANKEAYMITQKYELQTKMDVENLIKNSKALMDLEVKKIKRELVESVFKDLRESKKVSFNAQDCVNILKQRL.

The chain crosses the membrane as a helical span at residues Phe-2 to Leu-22.

Belongs to the ATPase B chain family. In terms of assembly, F-type ATPases have 2 components, F(1) - the catalytic core - and F(0) - the membrane proton channel. F(1) has five subunits: alpha(3), beta(3), gamma(1), delta(1), epsilon(1). F(0) has three main subunits: a(1), b(2) and c(10-14). The alpha and beta chains form an alternating ring which encloses part of the gamma chain. F(1) is attached to F(0) by a central stalk formed by the gamma and epsilon chains, while a peripheral stalk is formed by the delta and b chains.

The protein resides in the cell inner membrane. Functionally, f(1)F(0) ATP synthase produces ATP from ADP in the presence of a proton or sodium gradient. F-type ATPases consist of two structural domains, F(1) containing the extramembraneous catalytic core and F(0) containing the membrane proton channel, linked together by a central stalk and a peripheral stalk. During catalysis, ATP synthesis in the catalytic domain of F(1) is coupled via a rotary mechanism of the central stalk subunits to proton translocation. Component of the F(0) channel, it forms part of the peripheral stalk, linking F(1) to F(0). This is ATP synthase subunit b from Helicobacter pylori (strain ATCC 700392 / 26695) (Campylobacter pylori).